The primary structure comprises 120 residues: UPF0102 protein NT01CX_2205 (120 aa).

This sequence belongs to the UPF0102 family.

The polypeptide is UPF0102 protein NT01CX_2205 (Clostridium novyi (strain NT)).